The sequence spans 181 residues: Translation initiation factor IF-3 (181 aa).

It belongs to the IF-3 family. In terms of assembly, monomer.

It localises to the cytoplasm. IF-3 binds to the 30S ribosomal subunit and shifts the equilibrium between 70S ribosomes and their 50S and 30S subunits in favor of the free subunits, thus enhancing the availability of 30S subunits on which protein synthesis initiation begins. This Mycoplasma mycoides subsp. mycoides SC (strain CCUG 32753 / NCTC 10114 / PG1) protein is Translation initiation factor IF-3.